A 397-amino-acid polypeptide reads, in one-letter code: DNA-directed RNA polymerase subunit Rpo1C (397 aa).

Belongs to the RNA polymerase beta' chain family. In terms of assembly, part of the RNA polymerase complex.

The protein resides in the cytoplasm. It carries out the reaction RNA(n) + a ribonucleoside 5'-triphosphate = RNA(n+1) + diphosphate. DNA-dependent RNA polymerase (RNAP) catalyzes the transcription of DNA into RNA using the four ribonucleoside triphosphates as substrates. Forms part of the jaw domain. In Methanosarcina acetivorans (strain ATCC 35395 / DSM 2834 / JCM 12185 / C2A), this protein is DNA-directed RNA polymerase subunit Rpo1C.